Reading from the N-terminus, the 463-residue chain is Glutamyl-tRNA(Gln) amidotransferase subunit A, mitochondrial (463 aa).

Active-site charge relay system residues include Lys47 and Ser124. Ser148 (acyl-ester intermediate) is an active-site residue.

It belongs to the amidase family. GatA subfamily. As to quaternary structure, subunit of the heterotrimeric GatFAB amidotransferase (AdT) complex, composed of A, B and F subunits.

It localises to the mitochondrion. The catalysed reaction is L-glutamyl-tRNA(Gln) + L-glutamine + ATP + H2O = L-glutaminyl-tRNA(Gln) + L-glutamate + ADP + phosphate + H(+). In terms of biological role, allows the formation of correctly charged Gln-tRNA(Gln) through the transamidation of misacylated Glu-tRNA(Gln) in the mitochondria. The reaction takes place in the presence of glutamine and ATP through an activated gamma-phospho-Glu-tRNA(Gln). This is Glutamyl-tRNA(Gln) amidotransferase subunit A, mitochondrial from Eremothecium gossypii (strain ATCC 10895 / CBS 109.51 / FGSC 9923 / NRRL Y-1056) (Yeast).